Consider the following 360-residue polypeptide: MLVWLAEYLVRYETAFNAISYITVRANLALLTALFISLWIGPKVIKRLQILKFGQEVRNDGPESHFAKKGTPTMGGVMILFSIGVSTLLWANLANPYIWVCLFVLFGYGAIGFVDDFRKITRKNTDGLIARWKYFWMSVVALVAILWLYWLGHDTDATRLVIPFFKDIMPQLGLFYIVLSYFVIVGTGNAVNLTDGLDGLAIMPTALVAGAFALIAWATGNVNFAEYLHIPYIKYSSEVVVFCTAIVGASLGFLWFNTYPAQVFMGDVGSLALGGALGVVAILVRQEFLLVIMGGVFVVEALSVILQVGSYKLRKQRIFRMAPIHHHFELKGWPEPRVIIRFWIISLMLVLMGLVTLKLR.

Helical transmembrane passes span 21–41, 73–93, 94–114, 132–152, 168–188, 199–219, 239–259, 263–283, 288–308, and 338–358; these read YITVRANLALLTALFISLWIG, TMGGVMILFSIGVSTLLWANL, ANPYIWVCLFVLFGYGAIGFV, WKYFWMSVVALVAILWLYWLG, IMPQLGLFYIVLSYFVIVGTG, GLAIMPTALVAGAFALIAWAT, VVVFCTAIVGASLGFLWFNTY, VFMGDVGSLALGGALGVVAIL, FLLVIMGGVFVVEALSVILQV, and VIIRFWIISLMLVLMGLVTLK.

The protein belongs to the glycosyltransferase 4 family. MraY subfamily. Mg(2+) serves as cofactor.

It localises to the cell inner membrane. It catalyses the reaction UDP-N-acetyl-alpha-D-muramoyl-L-alanyl-gamma-D-glutamyl-meso-2,6-diaminopimeloyl-D-alanyl-D-alanine + di-trans,octa-cis-undecaprenyl phosphate = di-trans,octa-cis-undecaprenyl diphospho-N-acetyl-alpha-D-muramoyl-L-alanyl-D-glutamyl-meso-2,6-diaminopimeloyl-D-alanyl-D-alanine + UMP. The protein operates within cell wall biogenesis; peptidoglycan biosynthesis. In terms of biological role, catalyzes the initial step of the lipid cycle reactions in the biosynthesis of the cell wall peptidoglycan: transfers peptidoglycan precursor phospho-MurNAc-pentapeptide from UDP-MurNAc-pentapeptide onto the lipid carrier undecaprenyl phosphate, yielding undecaprenyl-pyrophosphoryl-MurNAc-pentapeptide, known as lipid I. In Haemophilus influenzae (strain ATCC 51907 / DSM 11121 / KW20 / Rd), this protein is Phospho-N-acetylmuramoyl-pentapeptide-transferase.